The chain runs to 2250 residues: DNA polymerase epsilon catalytic subunit A (2250 aa).

3 disordered regions span residues 1 to 63 (MPSR…GTAA), 235 to 259 (NGHGDDENRAWGAEDDTKKKKDKEP), and 1990 to 2010 (PGTEATSTMNPTKEKEKKAAS). Residues 32 to 41 (GGGGGGGGVA) show a composition bias toward gly residues. Positions 249–259 (DDTKKKKDKEP) are enriched in basic and acidic residues. A compositionally biased stretch (polar residues) spans 1990–2000 (PGTEATSTMNP). Zn(2+) contacts are provided by cysteine 2118, cysteine 2121, cysteine 2156, and cysteine 2159. The CysA-type zinc-finger motif lies at 2118–2159 (CKKCNAIRDVDLCRDPDRLPSVNPDSGEMLEPARKNWVCHKC). The [4Fe-4S] cluster site is built by cysteine 2190, cysteine 2193, cysteine 2205, and cysteine 2207. Residues 2190–2207 (CLKCSQTKSDNLAATCKC) carry the CysB motif motif.

Belongs to the DNA polymerase type-B family. Heterotetramer. Consists of 4 subunits: POL2, DPB2, DPB3 and DPB4. [4Fe-4S] cluster is required as a cofactor.

The protein localises to the nucleus. It catalyses the reaction DNA(n) + a 2'-deoxyribonucleoside 5'-triphosphate = DNA(n+1) + diphosphate. DNA polymerase II participates in chromosomal DNA replication. The polypeptide is DNA polymerase epsilon catalytic subunit A (POL2) (Cryptococcus neoformans var. neoformans serotype D (strain JEC21 / ATCC MYA-565) (Filobasidiella neoformans)).